The primary structure comprises 166 residues: Putative protein PTGES3L (166 aa).

In terms of domain architecture, CS spans 46 to 154 (RQHARTLWYD…RPPPAMDDLD (109 aa)). Residues 142–166 (STKRPPPAMDDLDDDSDSADDATSN) form a disordered region. A compositionally biased stretch (acidic residues) spans 151–166 (DDLDDDSDSADDATSN).

Belongs to the p23/wos2 family.

The sequence is that of Putative protein PTGES3L from Homo sapiens (Human).